The chain runs to 62 residues: Ferredoxin-3 (62 aa).

4Fe-4S ferredoxin-type domains follow at residues 2–28 and 29–62; these read SLKI…SAGS and DIYV…IVKA. [4Fe-4S] cluster contacts are provided by Cys-9, Cys-12, Cys-15, Cys-19, Cys-38, Cys-41, Cys-50, and Cys-54.

[4Fe-4S] cluster serves as cofactor.

In terms of biological role, ferredoxins are iron-sulfur proteins that transfer electrons in a wide variety of metabolic reactions. In Chlorobaculum tepidum (strain ATCC 49652 / DSM 12025 / NBRC 103806 / TLS) (Chlorobium tepidum), this protein is Ferredoxin-3.